The following is a 60-amino-acid chain: Snake venom metalloproteinase bothrojaractivase (60 aa).

The 60-residue stretch at 1 to 60 (RYIELAVVADHGMFTKYRVHELVNTVNGFFRSKQDLIKVQKDKTLTSFGEWRERDLLPRI) folds into the Peptidase M12B domain. Glutamate 4 is a Ca(2+) binding site.

It belongs to the venom metalloproteinase (M12B) family. P-I subfamily. Monomer. Zn(2+) serves as cofactor. In terms of tissue distribution, expressed by the venom gland.

The protein localises to the secreted. With respect to regulation, completely inhibited by EDTA and EGTA. Partially inhibited by serine proteinase inhibitors PMSF and benzamidine. Not inhibited by cysteine proteinase inhibitors mercury ions and E-64. Is active without cofactors, although the presence of low concentrations of calcium and zinc ions enhanced its ability to convert prothrombin (F2) into active thrombin. Functionally, prothrombin (F2) activator that is cofactor-independent. Also has fibrinolytic and fibrinogenolytic activity. It degrades the Aalpha-chain and more slowly the Bbeta-chain of fibrin and fibrinogen, while the gamma-chain is only partially and slowly affected. A dose-dependent procoagulant activity is shown in human plasma. In Bothrops jararaca (Jararaca), this protein is Snake venom metalloproteinase bothrojaractivase.